A 313-amino-acid chain; its full sequence is Ribosomal RNA small subunit methyltransferase H (313 aa).

Residues 35-37 (GGH), Asp-55, Phe-79, Asp-101, and Gln-108 each bind S-adenosyl-L-methionine.

The protein belongs to the methyltransferase superfamily. RsmH family.

It is found in the cytoplasm. The enzyme catalyses cytidine(1402) in 16S rRNA + S-adenosyl-L-methionine = N(4)-methylcytidine(1402) in 16S rRNA + S-adenosyl-L-homocysteine + H(+). Specifically methylates the N4 position of cytidine in position 1402 (C1402) of 16S rRNA. The chain is Ribosomal RNA small subunit methyltransferase H from Shigella flexneri.